Here is a 133-residue protein sequence, read N- to C-terminus: NADPH-dependent 7-cyano-7-deazaguanine reductase (133 aa).

Catalysis depends on cysteine 49, which acts as the Thioimide intermediate. The Proton donor role is filled by aspartate 56. Substrate-binding positions include 71–73 and 90–91; these read IEL and HE.

It belongs to the GTP cyclohydrolase I family. QueF type 1 subfamily.

It is found in the cytoplasm. It carries out the reaction 7-aminomethyl-7-carbaguanine + 2 NADP(+) = 7-cyano-7-deazaguanine + 2 NADPH + 3 H(+). It functions in the pathway tRNA modification; tRNA-queuosine biosynthesis. Catalyzes the NADPH-dependent reduction of 7-cyano-7-deazaguanine (preQ0) to 7-aminomethyl-7-deazaguanine (preQ1). This is NADPH-dependent 7-cyano-7-deazaguanine reductase from Leptospira interrogans serogroup Icterohaemorrhagiae serovar copenhageni (strain Fiocruz L1-130).